The chain runs to 157 residues: NADPH-dependent 7-cyano-7-deazaguanine reductase (157 aa).

The Thioimide intermediate role is filled by C55. The Proton donor role is filled by D62. Residues 77 to 79 (VES) and 96 to 97 (HE) each bind substrate.

The protein belongs to the GTP cyclohydrolase I family. QueF type 1 subfamily.

Its subcellular location is the cytoplasm. It carries out the reaction 7-aminomethyl-7-carbaguanine + 2 NADP(+) = 7-cyano-7-deazaguanine + 2 NADPH + 3 H(+). It functions in the pathway tRNA modification; tRNA-queuosine biosynthesis. Catalyzes the NADPH-dependent reduction of 7-cyano-7-deazaguanine (preQ0) to 7-aminomethyl-7-deazaguanine (preQ1). In Neisseria gonorrhoeae (strain ATCC 700825 / FA 1090), this protein is NADPH-dependent 7-cyano-7-deazaguanine reductase.